The chain runs to 370 residues: N-acyl-L-amino acid amidohydrolase (370 aa).

The protein belongs to the peptidase M20 family. In terms of assembly, homotetramer. The cofactor is Co(2+).

It carries out the reaction an N-acyl-L-amino acid + H2O = an L-alpha-amino acid + a carboxylate. It catalyses the reaction an N-acetyl-L-cysteine-S-conjugate + H2O = an S-substituted L-cysteine + acetate. Hydrolyzes most efficiently N-acetyl derivatives of aromatic amino acids but is also active on other amino acids. L-stereospecific. The protein is N-acyl-L-amino acid amidohydrolase (amaA) of Geobacillus stearothermophilus (Bacillus stearothermophilus).